Here is a 348-residue protein sequence, read N- to C-terminus: tRNA pseudouridine synthase D (348 aa).

Residue F27 coordinates substrate. D80 (nucleophile) is an active-site residue. N129 is a binding site for substrate. One can recognise a TRUD domain in the interval 155–303; the sequence is GVPNYFGSQR…VESARRAVLL (149 aa). F329 contributes to the substrate binding site.

The protein belongs to the pseudouridine synthase TruD family.

The catalysed reaction is uridine(13) in tRNA = pseudouridine(13) in tRNA. Responsible for synthesis of pseudouridine from uracil-13 in transfer RNAs. The polypeptide is tRNA pseudouridine synthase D (Pectobacterium carotovorum subsp. carotovorum (strain PC1)).